The chain runs to 339 residues: MGSRGGSGGDGAESHGYAADIHSIREAQARIAPYVHKTPVLSSTSIDAIVGKQLFFKCECFQKAGAFKIRGASNSIFALDDDEASKGVVTHSSGNHAAAVALAAKLRGIPAYIVIPRNAPACKVDNVKRYGGHIIWSDVSIESRESVAKRVQEETGAILVHPFNNKNTISGQGTVSLELLEEVPEIDTIIVPISGGGLISGVALAAKAINPSIRILAAEPKGADDSAQSKAAGKIITLPSTNTIADGLRAFLGDLTWPVVRDLVDDIIVVDDNAIVDAMKMCYEMLKVAVEPSGAIGLAAALSDEFKQSSAWHESSKIGIIVSGGNVDLGVLWESLYKR.

Residues Ser43 and Lys63 each coordinate ATP. The Proton acceptor role is filled by Lys68. Residue Lys68 is modified to N6-(pyridoxal phosphate)lysine. Residue Thr90 participates in Ca(2+) binding. Ser93 functions as the Proton acceptor in the catalytic mechanism. Residue Asn95 coordinates pyridoxal 5'-phosphate. Cys122 carries the S-nitrosocysteine modification. Tyr130 contacts ATP. Asp187 contributes to the Mg(2+) binding site. Residues Gly195, Gly196, and Gly197 each coordinate pyridoxal 5'-phosphate. Ca(2+) contacts are provided by Glu219, Ala223, and Asp225. Mg(2+) contacts are provided by Glu219, Ala223, and Asp225. Mn(2+)-binding residues include Glu219, Ala223, and Asp225. Lys287 is an ATP binding site. Ser323 lines the pyridoxal 5'-phosphate pocket. Asn326 contacts ATP.

It belongs to the serine/threonine dehydratase family. Requires Mg(2+) as cofactor. It depends on Mn(2+) as a cofactor. The cofactor is Ca(2+). Pyridoxal 5'-phosphate is required as a cofactor.

It carries out the reaction L-serine = D-serine. The catalysed reaction is L-serine = pyruvate + NH4(+). It catalyses the reaction D-serine = pyruvate + NH4(+). Its function is as follows. Catalyzes the synthesis of D-serine from L-serine. Has dehydratase activity towards both L-serine and D-serine. This chain is Serine racemase, found in Oryza sativa subsp. indica (Rice).